The sequence spans 54 residues: Sec-independent protein translocase protein TatA (54 aa).

Residues 1-21 (MGMSFSHLLIVLLIIFVLFGA) traverse the membrane as a helical segment.

The protein belongs to the TatA/E family. The Tat system comprises two distinct complexes: a TatABC complex, containing multiple copies of TatA, TatB and TatC subunits, and a separate TatA complex, containing only TatA subunits. Substrates initially bind to the TatABC complex, which probably triggers association of the separate TatA complex to form the active translocon.

It localises to the cell inner membrane. Functionally, part of the twin-arginine translocation (Tat) system that transports large folded proteins containing a characteristic twin-arginine motif in their signal peptide across membranes. TatA could form the protein-conducting channel of the Tat system. The protein is Sec-independent protein translocase protein TatA of Rickettsia canadensis (strain McKiel).